The primary structure comprises 421 residues: uncharacterized protein (421 aa).

CBS domains follow at residues 13-74 (MTKD…VRSL), 74-133 (LMYK…MKDT), 139-195 (MTRN…PKKK), and 217-274 (MNTP…KGAM).

This is an uncharacterized protein from Methanocaldococcus jannaschii (strain ATCC 43067 / DSM 2661 / JAL-1 / JCM 10045 / NBRC 100440) (Methanococcus jannaschii).